Reading from the N-terminus, the 292-residue chain is tRNA (guanine-N(7)-)-methyltransferase (292 aa).

Positions 1 to 52 (MGKIEATSKEEKLRVQKEAEARRRAYRDLKKEARQMQKEVKFDTDDNSELPK) are disordered. Residues Gly-106, 129-130 (EI), 166-167 (NA), and Cys-186 contribute to the S-adenosyl-L-methionine site. Asp-189 is a catalytic residue. 264-266 (TEE) contributes to the S-adenosyl-L-methionine binding site.

The protein belongs to the class I-like SAM-binding methyltransferase superfamily. TrmB family. As to quaternary structure, forms a complex with TRM82.

The protein resides in the nucleus. The catalysed reaction is guanosine(46) in tRNA + S-adenosyl-L-methionine = N(7)-methylguanosine(46) in tRNA + S-adenosyl-L-homocysteine. The protein operates within tRNA modification; N(7)-methylguanine-tRNA biosynthesis. Its function is as follows. Catalyzes the formation of N(7)-methylguanine at position 46 (m7G46) in tRNA. This chain is tRNA (guanine-N(7)-)-methyltransferase, found in Debaryomyces hansenii (strain ATCC 36239 / CBS 767 / BCRC 21394 / JCM 1990 / NBRC 0083 / IGC 2968) (Yeast).